The following is a 449-amino-acid chain: Na(+)/H(+) antiporter NhaA 1 (449 aa).

The next 11 membrane-spanning stretches (helical) occupy residues 32–52 (IEATSGAVLLLATVVALTLSN), 87–107 (GLMTLFFFIVALEIKREVVLG), 114–134 (MVAFSVVAAAGGMLVPMGLYL), 145–165 (GWGVVMPTDTAFVIGCLALLG), 174–194 (VFLLSLAVVDDLAAILVVAVG), 202–222 (TALALGAVGLVIIRGMALLGV), 233–253 (AIIWLAVNASGIHATIVGVIL), 318–338 (WVAFGVMPLFALANAGVSITI), 347–367 (LAVMAGFVLGKPIGVTAFAWL), 382–402 (WGGLVGGALLTGIGFTMALFI), and 417–437 (LGILAASVVSSVAGLTLLCMF).

Belongs to the NhaA Na(+)/H(+) (TC 2.A.33) antiporter family.

Its subcellular location is the cell inner membrane. The enzyme catalyses Na(+)(in) + 2 H(+)(out) = Na(+)(out) + 2 H(+)(in). Functionally, na(+)/H(+) antiporter that extrudes sodium in exchange for external protons. The sequence is that of Na(+)/H(+) antiporter NhaA 1 from Acidiphilium cryptum (strain JF-5).